We begin with the raw amino-acid sequence, 151 residues long: MRIILQRVNESRVEVAGQIIGRIEKGLNLLVGITPSDTDQEVAWMARKCLELRIFPDQSGKLSQSVQDIEGGLLVISQFTLYGDCRKGRRPSFDKAAPGAMAEQIYEQFVTKLRASGLQVETGQFGAMMNVYIENDGPVTLILEREAESER.

A Gly-cisPro motif, important for rejection of L-amino acids motif is present at residues 137-138; sequence GP.

It belongs to the DTD family. Homodimer.

Its subcellular location is the cytoplasm. It catalyses the reaction glycyl-tRNA(Ala) + H2O = tRNA(Ala) + glycine + H(+). The catalysed reaction is a D-aminoacyl-tRNA + H2O = a tRNA + a D-alpha-amino acid + H(+). In terms of biological role, an aminoacyl-tRNA editing enzyme that deacylates mischarged D-aminoacyl-tRNAs. Also deacylates mischarged glycyl-tRNA(Ala), protecting cells against glycine mischarging by AlaRS. Acts via tRNA-based rather than protein-based catalysis; rejects L-amino acids rather than detecting D-amino acids in the active site. By recycling D-aminoacyl-tRNA to D-amino acids and free tRNA molecules, this enzyme counteracts the toxicity associated with the formation of D-aminoacyl-tRNA entities in vivo and helps enforce protein L-homochirality. In Acaryochloris marina (strain MBIC 11017), this protein is D-aminoacyl-tRNA deacylase.